Here is a 1843-residue protein sequence, read N- to C-terminus: Protein TIC 214 (1843 aa).

The next 6 membrane-spanning stretches (helical) occupy residues 18–38 (IINSVVVVGLYYGFLTTFSIG), 64–84 (FITGQLMMFISIYYAPLHLAL), 87–107 (PHTITVLVLPYLLFHFFWNNH), 124–144 (LSIQCVFLNNLIFQLFNHFIL), 172–192 (VGWLIGHILFMKWVGLVLFWI), and 217–237 (IFSILLFITCVYYLGRIPSPI). Disordered regions lie at residues 244-281 (ETSKTEEREESEEETDVEIETTSETKGTKQEQEGAAEK), 557-576 (EEIENDEESKPDHGIRSRKA), 582-647 (FTDN…DEVA), 724-744 (NSEEEDTKEKEKKREEKRQEN), and 1527-1586 (SLEL…KKKK). Acidic residues predominate over residues 251–264 (REESEEETDVEIET). A compositionally biased stretch (basic and acidic residues) spans 269-281 (KGTKQEQEGAAEK). The segment covering 590 to 639 (NTPTSTTETTSTAETTSTTETTSTTKNTSTTKNTSTTETTSTTENENTSN) has biased composition (low complexity). Basic and acidic residues-rich tracts occupy residues 730–744 (TKEKEKKREEKRQEN) and 1527–1540 (SLELKNKEEKKKPA). The span at 1543–1562 (NIGSDTQKQGNPGSDPSTQQ) shows a compositional bias: polar residues. A compositionally biased stretch (basic and acidic residues) spans 1563–1580 (KDIKKNVKEDYDGRSDIQ).

The protein belongs to the TIC214 family. As to quaternary structure, part of the Tic complex.

It is found in the plastid. Its subcellular location is the chloroplast inner membrane. Its function is as follows. Involved in protein precursor import into chloroplasts. May be part of an intermediate translocation complex acting as a protein-conducting channel at the inner envelope. This chain is Protein TIC 214, found in Nandina domestica (Heavenly bamboo).